We begin with the raw amino-acid sequence, 431 residues long: Pachytene checkpoint protein 2 homolog (431 aa).

N-acetylmethionine is present on Met-1. An ATP-binding site is contributed by 179–186 (GPPGTGKT).

This sequence belongs to the AAA ATPase family. PCH2 subfamily. As to quaternary structure, specifically interacts with the ligand binding domain of the thyroid receptor (TR). This interaction does not require the presence of thyroid hormone for its interaction. Interacts with proteasome subunit PSMA8; to participate in meiosis progression during spermatogenesis.

Functionally, plays a key role in chromosome recombination and chromosome structure development during meiosis. Required at early steps in meiotic recombination that leads to non-crossovers pathways. Also needed for efficient completion of homologous synapsis by influencing crossover distribution along the chromosomes affecting both crossovers and non-crossovers pathways. Also required for development of higher-order chromosome structures and is needed for synaptonemal-complex formation. In males, required for efficient synapsis of the sex chromosomes and for sex body formation. Promotes early steps of the DNA double-strand breaks (DSBs) repair process upstream of the assembly of RAD51 complexes. Required for depletion of HORMAD1 and HORMAD2 from synapsed chromosomes. Plays a role in mitotic spindle assembly checkpoint (SAC) activation. This chain is Pachytene checkpoint protein 2 homolog (TRIP13), found in Sus scrofa (Pig).